The chain runs to 119 residues: Autophagy-related protein 8C-like (119 aa).

The Phosphatidylethanolamine amidated glycine moiety is linked to residue Gly117. A propeptide spans 118-119 (SF) (removed in mature form).

It belongs to the ATG8 family. Interacts with ATG4. Interacts with the Phytophtora infestans effector PexRD54. Interacts with JOKA2. Post-translationally, the C-terminal 2 residues are removed by ATG4 to expose Gly-117 at the C-terminus. The C-terminal Gly is then amidated with phosphatidylethanolamine by an activating system similar to that for ubiquitin. The phosphatidylethanolamine amidated glycine is required for autophagosome formation.

Its subcellular location is the cytoplasmic vesicle. The protein localises to the autophagosome membrane. It localises to the vacuole membrane. It is found in the cytoplasm. The protein resides in the cytoskeleton. In terms of biological role, ubiquitin-like modifier involved in autophagosomes formation. May mediate the delivery of the autophagosomes to the vacuole via the microtubule cytoskeleton. ATG8CL-mediated selective autophagy contributes to defense against the fungal pathogen Phytophtora infestans. This is Autophagy-related protein 8C-like from Solanum tuberosum (Potato).